The primary structure comprises 632 residues: Putative golgin subfamily A member 8I (632 aa).

The disordered stretch occupies residues 1–77 (MAEETQHNKL…SSATLKDLES (77 aa)). The span at 38 to 50 (TNGSIPQTATSGG) shows a compositional bias: polar residues. Coiled coils occupy residues 86–154 (LDSR…HMKR) and 209–421 (KLEQ…SLMA). Residues 352-362 (KQEERIQEQHK) show a composition bias toward basic and acidic residues. Disordered regions lie at residues 352–383 (KQEE…ENKS), 423–445 (PGEG…PMPS), 496–524 (LSEP…DEGE), and 550–569 (AHNP…ELGA). The segment covering 508 to 520 (LGGGHHQAGAQGG) has biased composition (gly residues). Positions 529-632 (AADGIAAYSN…CWAWLPRRRR (104 aa)) are golgi-targeting domain. The span at 555–568 (DEPGPGAPAPQELG) shows a compositional bias: low complexity.

This sequence belongs to the GOLGA8 family.

Its subcellular location is the golgi apparatus. The protein resides in the golgi stack membrane. Functionally, may be involved in maintaining Golgi structure. This is Putative golgin subfamily A member 8I from Homo sapiens (Human).